The primary structure comprises 254 residues: Ubiquinone/menaquinone biosynthesis C-methyltransferase UbiE (254 aa).

S-adenosyl-L-methionine contacts are provided by residues T77, D98, 126-127 (NA), and S143.

This sequence belongs to the class I-like SAM-binding methyltransferase superfamily. MenG/UbiE family.

The catalysed reaction is a 2-demethylmenaquinol + S-adenosyl-L-methionine = a menaquinol + S-adenosyl-L-homocysteine + H(+). It carries out the reaction a 2-methoxy-6-(all-trans-polyprenyl)benzene-1,4-diol + S-adenosyl-L-methionine = a 5-methoxy-2-methyl-3-(all-trans-polyprenyl)benzene-1,4-diol + S-adenosyl-L-homocysteine + H(+). It participates in quinol/quinone metabolism; menaquinone biosynthesis; menaquinol from 1,4-dihydroxy-2-naphthoate: step 2/2. The protein operates within cofactor biosynthesis; ubiquinone biosynthesis. Functionally, methyltransferase required for the conversion of demethylmenaquinol (DMKH2) to menaquinol (MKH2) and the conversion of 2-polyprenyl-6-methoxy-1,4-benzoquinol (DDMQH2) to 2-polyprenyl-3-methyl-6-methoxy-1,4-benzoquinol (DMQH2). This chain is Ubiquinone/menaquinone biosynthesis C-methyltransferase UbiE, found in Hydrogenovibrio crunogenus (strain DSM 25203 / XCL-2) (Thiomicrospira crunogena).